The sequence spans 515 residues: GMP synthase [glutamine-hydrolyzing] (515 aa).

Residues 10–200 enclose the Glutamine amidotransferase type-1 domain; the sequence is TIIVLDFGSQ…VFGVCGCSEG (191 aa). C87 acts as the Nucleophile in catalysis. Residues H174 and E176 contribute to the active site. Positions 201–390 constitute a GMPS ATP-PPase domain; it reads WNMENFIEVE…LGIPDEIVWR (190 aa). 228-234 is a binding site for ATP; it reads SGGVDSS.

Homodimer.

It carries out the reaction XMP + L-glutamine + ATP + H2O = GMP + L-glutamate + AMP + diphosphate + 2 H(+). Its pathway is purine metabolism; GMP biosynthesis; GMP from XMP (L-Gln route): step 1/1. Catalyzes the synthesis of GMP from XMP. The polypeptide is GMP synthase [glutamine-hydrolyzing] (Bacillus anthracis (strain A0248)).